A 447-amino-acid polypeptide reads, in one-letter code: Rab GDP dissociation inhibitor alpha (447 aa).

Belongs to the Rab GDI family. In terms of assembly, interacts with RHOH. Interacts with the non-phosphorylated forms of RAB1A, RAB3A, RAB5A, RAB5B, RAB5C, RAB8A, RAB8B, RAB10, RAB12, RAB35, and RAB43.

Its subcellular location is the cytoplasm. It is found in the golgi apparatus. The protein resides in the trans-Golgi network. Its function is as follows. Regulates the GDP/GTP exchange reaction of most Rab proteins by inhibiting the dissociation of GDP from them, and the subsequent binding of GTP to them. Promotes the dissociation of GDP-bound Rab proteins from the membrane and inhibits their activation. Promotes the dissociation of RAB1A, RAB3A, RAB5A and RAB10 from membranes. This is Rab GDP dissociation inhibitor alpha (GDI1) from Macaca fascicularis (Crab-eating macaque).